The sequence spans 509 residues: Probable cytochrome P450 6a14 (509 aa).

Residue C454 participates in heme binding.

Belongs to the cytochrome P450 family. It depends on heme as a cofactor.

It is found in the endoplasmic reticulum membrane. It localises to the microsome membrane. May be involved in the metabolism of insect hormones and in the breakdown of synthetic insecticides. The polypeptide is Probable cytochrome P450 6a14 (Cyp6a14) (Drosophila melanogaster (Fruit fly)).